The sequence spans 516 residues: uncharacterized protein (516 aa).

9 helical membrane passes run Ser183–Val203, Val261–Ile281, Val308–Leu328, Leu329–Phe349, Leu356–Leu376, Leu379–Ala399, Leu430–Leu450, Pro461–Leu481, and Ile492–Phe512.

The protein resides in the cell membrane. Functionally, possible permease/transporter. This is an uncharacterized protein from Sinorhizobium fredii (strain NBRC 101917 / NGR234).